Reading from the N-terminus, the 236-residue chain is MARPLVPSSQKALLLELKGLQEEPVEGFRVTLVDEGDLYNWEVAIFGPPNTYYEGGYFKARLKFPIDYPYSPPAFRFLTKMWHPNIYETGDVCISILHPPVDDPQSGELPSERWNPTQNVRTILLSVISLLNEPNTFSPANVDASVMYRKWKESKGKDREYTDIIRKQVLGTKVDAERDGVKVPTTLAEYCVKTKAPAPDEGSDLFYDDYYEDGEVEEEADSCFGDDEDDSGTEES.

Positions 8–174 (SSQKALLLEL…IRKQVLGTKV (167 aa)) constitute a UBC core domain. The active-site Glycyl thioester intermediate is the C93. The segment at 98 to 113 (HPPVDDPQSGELPSER) is important for ubiquitin transfer. Residues 190 to 236 (YCVKTKAPAPDEGSDLFYDDYYEDGEVEEEADSCFGDDEDDSGTEES) form an SCF-binding region. A phosphoserine; by CK2 mark is found at S203, S222, and S231. Residues 216–236 (VEEEADSCFGDDEDDSGTEES) form a disordered region. Residue T233 is modified to Phosphothreonine; by CK2. Phosphoserine; by CK2 is present on S236.

This sequence belongs to the ubiquitin-conjugating enzyme family. In terms of assembly, interacts with multiple Cul1-RING E3 ubiquitin-protein ligase complexes, also known as SCF (SKP1-CUL1-F-box protein) complexes. Identified in a SCF E3 ubiquitin ligase complex together with HINT1 and RBX1. When cullin is neddylated, the interaction between the E2 and the SCF complex is strengthened. Interacts with multiple Cul2-RING (CRL2) E3 ubiquitin-protein ligase complexes, also known as ECS (Elongin BC-CUL2/5-SOCS-box protein) complexes. When phosphorylated, interacts with beta-TrCP (BTRC). Interacts with human herpes virus 1 protein ICP0 and associates with the proteasome for degradation. Interacts with casein kinase subunit CSNK2B. Interacts with CNTD1; this interaction regulates the cell-cycle progression. In terms of processing, autoubiquitinated. Autoubiquitination is promoted by the human herpes virus 1 protein ICP0 and leads to degradation by the Ubiquitin-proteasomal pathway. Post-translationally, phosphorylated by CK2. Phosphorylation of the C-terminal tail by CK2 controls the nuclear localization. Expressed in testes during spermatogenesis to regulate repression of cAMP-induced transcription.

The protein localises to the cytoplasm. It localises to the nucleus. The enzyme catalyses S-ubiquitinyl-[E1 ubiquitin-activating enzyme]-L-cysteine + [E2 ubiquitin-conjugating enzyme]-L-cysteine = [E1 ubiquitin-activating enzyme]-L-cysteine + S-ubiquitinyl-[E2 ubiquitin-conjugating enzyme]-L-cysteine.. It catalyses the reaction S-ubiquitinyl-[E1 ubiquitin-activating enzyme]-L-cysteine + [acceptor protein]-L-lysine = [E1 ubiquitin-activating enzyme]-L-cysteine + N(6)-monoubiquitinyl-[acceptor protein]-L-lysine.. It functions in the pathway protein modification; protein ubiquitination. With respect to regulation, CDC34-catalyzed polyubiquitin chain assembly activity is stimulated by the conjugation of NEDD8 to the CUL1 SCF E3 ligase complex subunit. Functionally, E2 ubiquitin-conjugating enzyme that accepts ubiquitin from an E1 ubiquitin-activating protein, and catalyzes its covalent attachment to other proteins by an E3 ubiquitin-protein ligase complex. In vitro catalyzes 'Lys-48'-linked polyubiquitination. Cooperates with the E2 UBCH5C and the SCF(FBXW11) E3 ligase complex for the polyubiquitination of NFKBIA leading to its subsequent proteasomal degradation. Performs ubiquitin chain elongation building ubiquitin chains from the UBE2D3-primed NFKBIA-linked ubiquitin. UBE2D3 acts as an initiator E2, priming the phosphorylated NFKBIA target at positions 'Lys-21' and/or 'Lys-22' with a monoubiquitin. Cooperates with the SCF(SKP2) E3 ligase complex to regulate cell proliferation through ubiquitination and degradation of MYBL2 and KIP1. Involved in ubiquitin conjugation and degradation of CREM isoform ICERIIgamma and ATF15 resulting in abrogation of ICERIIgamma- and ATF5-mediated repression of cAMP-induced transcription during both meiotic and mitotic cell cycles. Involved in the regulation of the cell cycle G2/M phase through its targeting of the WEE1 kinase for ubiquitination and degradation. Also involved in the degradation of beta-catenin. Is target of human herpes virus 1 protein ICP0, leading to ICP0-dependent dynamic interaction with proteasomes. This chain is Ubiquitin-conjugating enzyme E2 R1 (CDC34), found in Homo sapiens (Human).